A 508-amino-acid polypeptide reads, in one-letter code: Photosystem II CP47 reaction center protein (508 aa).

Helical transmembrane passes span 21–36 (AVHI…WAGS), 101–115 (IVFS…IWHW), 140–156 (GIHL…FGAF), 203–218 (IAAG…FHLS), 237–252 (VLSS…AFVV), and 457–472 (TFAL…HGAR).

Belongs to the PsbB/PsbC family. PsbB subfamily. PSII is composed of 1 copy each of membrane proteins PsbA, PsbB, PsbC, PsbD, PsbE, PsbF, PsbH, PsbI, PsbJ, PsbK, PsbL, PsbM, PsbT, PsbX, PsbY, PsbZ, Psb30/Ycf12, at least 3 peripheral proteins of the oxygen-evolving complex and a large number of cofactors. It forms dimeric complexes. Binds multiple chlorophylls. PSII binds additional chlorophylls, carotenoids and specific lipids. is required as a cofactor.

It is found in the plastid. The protein resides in the chloroplast thylakoid membrane. Its function is as follows. One of the components of the core complex of photosystem II (PSII). It binds chlorophyll and helps catalyze the primary light-induced photochemical processes of PSII. PSII is a light-driven water:plastoquinone oxidoreductase, using light energy to abstract electrons from H(2)O, generating O(2) and a proton gradient subsequently used for ATP formation. This is Photosystem II CP47 reaction center protein from Agrostis stolonifera (Creeping bentgrass).